We begin with the raw amino-acid sequence, 299 residues long: Tyrosine recombinase XerC (299 aa).

A Core-binding (CB) domain is found at 1-85 (MERQLDAYCE…AVRGLYHYLN (85 aa)). One can recognise a Tyr recombinase domain in the interval 106–285 (RLPKTLDTDR…DFQHLATVYD (180 aa)). Catalysis depends on residues Arg-146, Lys-170, His-237, Arg-240, and His-263. Tyr-272 functions as the O-(3'-phospho-DNA)-tyrosine intermediate in the catalytic mechanism.

This sequence belongs to the 'phage' integrase family. XerC subfamily. In terms of assembly, forms a cyclic heterotetrameric complex composed of two molecules of XerC and two molecules of XerD.

It is found in the cytoplasm. Site-specific tyrosine recombinase, which acts by catalyzing the cutting and rejoining of the recombining DNA molecules. The XerC-XerD complex is essential to convert dimers of the bacterial chromosome into monomers to permit their segregation at cell division. It also contributes to the segregational stability of plasmids. The sequence is that of Tyrosine recombinase XerC from Pseudomonas fluorescens.